A 721-amino-acid chain; its full sequence is Polyribonucleotide nucleotidyltransferase (721 aa).

Mg(2+)-binding residues include Asp-495 and Asp-501. The 60-residue stretch at 562–621 (PRLLSFRIDPELIGTVIGPGGRTIKGITERTNTKIDIEDGGIVTIASHDGAAAEAAQRII) folds into the KH domain. The S1 motif domain occupies 631–699 (GEVFSGTITR…NRGRINLTLR (69 aa)). Residues 700–721 (GVPQNGEETQSEPAPTPVAPLN) are disordered.

The protein belongs to the polyribonucleotide nucleotidyltransferase family. Requires Mg(2+) as cofactor.

It is found in the cytoplasm. The catalysed reaction is RNA(n+1) + phosphate = RNA(n) + a ribonucleoside 5'-diphosphate. Involved in mRNA degradation. Catalyzes the phosphorolysis of single-stranded polyribonucleotides processively in the 3'- to 5'-direction. The chain is Polyribonucleotide nucleotidyltransferase from Prochlorococcus marinus (strain MIT 9303).